The primary structure comprises 433 residues: Arabinooligosaccharide-binding protein (433 aa).

Positions 1–21 (MKKMTVCFLVLMMLLTLVIAG) are cleaved as a signal peptide. The N-palmitoyl cysteine moiety is linked to residue Cys22. Residue Cys22 is the site of S-diacylglycerol cysteine attachment.

Belongs to the bacterial solute-binding protein 1 family. The complex is composed of two ATP-binding proteins (MsmX), two transmembrane proteins (AraP and AraQ) and a solute-binding protein (AraN).

The protein localises to the cell membrane. Functionally, part of the ABC transporter complex AraNPQ involved in the uptake of arabinooligosaccharides. Transports alpha-1,5-arabinooligosaccharides, at least up to four L-arabinosyl units. AraN captures the substrate and delivers it to the two transmembrane components. In Bacillus subtilis (strain 168), this protein is Arabinooligosaccharide-binding protein.